We begin with the raw amino-acid sequence, 37 residues long: Cytochrome b6-f complex subunit 5 (37 aa).

Residues 5-25 traverse the membrane as a helical segment; it reads LLCGIVLGLIPVTLAGLFFAA.

The protein belongs to the PetG family. The 4 large subunits of the cytochrome b6-f complex are cytochrome b6, subunit IV (17 kDa polypeptide, PetD), cytochrome f and the Rieske protein, while the 4 small subunits are PetG, PetL, PetM and PetN. The complex functions as a dimer.

The protein resides in the cellular thylakoid membrane. Functionally, component of the cytochrome b6-f complex, which mediates electron transfer between photosystem II (PSII) and photosystem I (PSI), cyclic electron flow around PSI, and state transitions. PetG is required for either the stability or assembly of the cytochrome b6-f complex. The polypeptide is Cytochrome b6-f complex subunit 5 (Thermosynechococcus vestitus (strain NIES-2133 / IAM M-273 / BP-1)).